A 225-amino-acid chain; its full sequence is Octanoyltransferase (225 aa).

Positions 37–217 (SDTPDEFWVV…ELASLIGYQT (181 aa)) constitute a BPL/LPL catalytic domain. Substrate contacts are provided by residues 76–83 (RGGQVTYH), 148–150 (SLG), and 161–163 (GLA). Cys-179 serves as the catalytic Acyl-thioester intermediate.

This sequence belongs to the LipB family.

The protein localises to the cytoplasm. It carries out the reaction octanoyl-[ACP] + L-lysyl-[protein] = N(6)-octanoyl-L-lysyl-[protein] + holo-[ACP] + H(+). The protein operates within protein modification; protein lipoylation via endogenous pathway; protein N(6)-(lipoyl)lysine from octanoyl-[acyl-carrier-protein]: step 1/2. In terms of biological role, catalyzes the transfer of endogenously produced octanoic acid from octanoyl-acyl-carrier-protein onto the lipoyl domains of lipoate-dependent enzymes. Lipoyl-ACP can also act as a substrate although octanoyl-ACP is likely to be the physiological substrate. The polypeptide is Octanoyltransferase (Aeromonas salmonicida (strain A449)).